The primary structure comprises 344 residues: Glycerol-3-phosphate dehydrogenase [NAD(P)+] 2 (344 aa).

Residues Ser12, Trp13, Arg33, Arg34, and Lys107 each coordinate NADPH. The sn-glycerol 3-phosphate site is built by Lys107, Gly138, and Ser140. Ala142 lines the NADPH pocket. 5 residues coordinate sn-glycerol 3-phosphate: Lys193, Asp246, Ser256, Arg257, and Asn258. Lys193 serves as the catalytic Proton acceptor. Arg257 serves as a coordination point for NADPH. NADPH is bound by residues Val281 and Glu283.

It belongs to the NAD-dependent glycerol-3-phosphate dehydrogenase family.

It localises to the cytoplasm. The enzyme catalyses sn-glycerol 3-phosphate + NAD(+) = dihydroxyacetone phosphate + NADH + H(+). The catalysed reaction is sn-glycerol 3-phosphate + NADP(+) = dihydroxyacetone phosphate + NADPH + H(+). It functions in the pathway membrane lipid metabolism; glycerophospholipid metabolism. Functionally, catalyzes the reduction of the glycolytic intermediate dihydroxyacetone phosphate (DHAP) to sn-glycerol 3-phosphate (G3P), the key precursor for phospholipid synthesis. The chain is Glycerol-3-phosphate dehydrogenase [NAD(P)+] 2 from Salinibacter ruber (strain DSM 13855 / M31).